Here is a 1268-residue protein sequence, read N- to C-terminus: MGTKWTEEQELAINTRKCNLLVAAAAGSGKTAVLVERIIKMITEGENPVDIDKLLVVTFTNAAASEMRERIGDAISKALEKDPSSKVLQRQLALLNRASITTMHSFCLEVIKNNFHLIDLDPGFRIGDQTECELIKQDILADLFEDMYAKDDECFKDLVEAYGGSKSDDNLNSIILKFYNFIMSGPWPEAWLKDKVEEFNINSIEELEGKKWIEVLKESIILDLNNAYSMLTQARDIAEMGGGLEPYLVNINPEIIQVEELKIALSEGIVKFYNNLMGASFGRLKSVRKASVDDERALEKTKSLRDESKKIIENLRDNVFETSLEEAVLGMKKMYPLMKCLSGLVIEFSNRYRDKKREKDILDFNDLEHLCLEILIDKDEEGNIKPSQVALEFKDRFEEVLVDEYQDSNTIQETIVGMVSRRDIENPNVFMVGDVKQSIYKFRQANPELFLEKYINYREFEDSNRKIMLYKNFRSREEIINGVNYIFKTLMSNTVGELEYDEKEALNLGASYGELNEENVEKEYIDEIENLKVAGDIELNILNKAGNKDYSDEDELGEEEEDLDSIQLEARIIGKKINELMNPEDGSHYMVFDKDLGKYRKIKYKDIVILLRATKNWAETFVDELGTYGIPVYADTGTGYFQTIEIRTILALLHIIDNPMQDIYILSALRSPIFSFTSEEFADLRLLNKDKYFFEIIKEVVDGIYDESISKDLKGKCKYFLDYLNKWREKAAYMPIDEFIWFLYSDTSYYGYVGTMPNGVQRQANLRILFQRAKQYESTSFKGLFNFINFINKLKKSSGDMGSAKILGENENVVRIMSIHKSKGLEFPVVILGGTGKQFNKMDLREDILLHETLGIGTNCIDIKKRIKYDTLQKHAIKKKCELEVLSEEMRILYVAFTRAKEKLIITGAVSDLEKSCENWCKASASSEDNRINPGNVLKGKSYLDWIGMALTKHKDGDAIRNIGNGDITLNLDDKSNWSFKSWDRSELLETNNNKKEKNNIDIFESNNWIESKKDIKEVIEIRDRLGFKYKYIESCNTPSNISVTELKRAHQEEEFMQESYNIIDNESNEENKKEKIKRKPRFMEERQEEFSAAKKGTITHFVMQHIDLDKVTYIDEIREEVLKMVKKELLTEEEGKVVNVFKIQKFFKSDLGQRMLSSYKSGKKVYRELPFITEIPSSIIEKNLDPKIYGEEKVRLQGIIDAFFKEEDGYVLLDYKTDYVKEGEEENFINKYKIQINLYKDTLNKILGEEVKEAYLYSFYLEKELKI.

A UvrD-like helicase ATP-binding domain is found at 3–476 (TKWTEEQELA…IMLYKNFRSR (474 aa)). 24–31 (AAAGSGKT) contacts ATP. Residues 528 to 824 (IENLKVAGDI…RIMSIHKSKG (297 aa)) enclose the UvrD-like helicase C-terminal domain.

It belongs to the helicase family. AddA subfamily. Heterodimer of AddA and AddB/RexB. The cofactor is Mg(2+).

The enzyme catalyses Couples ATP hydrolysis with the unwinding of duplex DNA by translocating in the 3'-5' direction.. It catalyses the reaction ATP + H2O = ADP + phosphate + H(+). Functionally, the heterodimer acts as both an ATP-dependent DNA helicase and an ATP-dependent, dual-direction single-stranded exonuclease. Recognizes the chi site generating a DNA molecule suitable for the initiation of homologous recombination. The AddA nuclease domain is required for chi fragment generation; this subunit has the helicase and 3' -&gt; 5' nuclease activities. This is ATP-dependent helicase/nuclease subunit A from Clostridium perfringens (strain 13 / Type A).